The primary structure comprises 471 residues: Ribulose bisphosphate carboxylase large chain (471 aa).

Residue Lys-5 is modified to N6,N6,N6-trimethyllysine. The substrate site is built by Asn-114 and Thr-164. Lys-166 functions as the Proton acceptor in the catalytic mechanism. Residue Lys-168 participates in substrate binding. Residues Lys-192, Asp-194, and Glu-195 each contribute to the Mg(2+) site. The residue at position 192 (Lys-192) is an N6-carboxylysine. Catalysis depends on His-285, which acts as the Proton acceptor. Arg-286, His-318, and Ser-370 together coordinate substrate.

Belongs to the RuBisCO large chain family. Type I subfamily. As to quaternary structure, heterohexadecamer of 8 large chains and 8 small chains; disulfide-linked. The disulfide link is formed within the large subunit homodimers. Mg(2+) is required as a cofactor. In terms of processing, the disulfide bond which can form in the large chain dimeric partners within the hexadecamer appears to be associated with oxidative stress and protein turnover.

The protein resides in the plastid. The protein localises to the chloroplast. The catalysed reaction is 2 (2R)-3-phosphoglycerate + 2 H(+) = D-ribulose 1,5-bisphosphate + CO2 + H2O. It carries out the reaction D-ribulose 1,5-bisphosphate + O2 = 2-phosphoglycolate + (2R)-3-phosphoglycerate + 2 H(+). RuBisCO catalyzes two reactions: the carboxylation of D-ribulose 1,5-bisphosphate, the primary event in carbon dioxide fixation, as well as the oxidative fragmentation of the pentose substrate in the photorespiration process. Both reactions occur simultaneously and in competition at the same active site. The chain is Ribulose bisphosphate carboxylase large chain from Strychnos nux-vomica (Poison nut).